The primary structure comprises 253 residues: CENP-A recruiting complex protein mis20 (253 aa).

The disordered stretch occupies residues 113 to 136; it reads TGPTTSKNKHPSHSNTIRSPPYKV.

In terms of assembly, component of the CENP-A recruiting complex composed of at least mis16, mis19, mis19 and mis20.

The protein localises to the cytoplasm. It is found in the cytoskeleton. The protein resides in the microtubule organizing center. It localises to the spindle pole body. Its subcellular location is the chromosome. The protein localises to the centromere. Component of the CENP-A recruiting complex that ensures the integrity of mitotic spindles through maintenance of kinetochore factors mis6/CENP-I and cnp1/CENP-A. Seems dispensable for proper chromosome segregation. The sequence is that of CENP-A recruiting complex protein mis20 from Schizosaccharomyces pombe (strain 972 / ATCC 24843) (Fission yeast).